The sequence spans 555 residues: Meiotic mRNA stability protein kinase SSN3 (555 aa).

The Protein kinase domain maps to tyrosine 75–phenylalanine 463. Isoleucine 81–valine 89 provides a ligand contact to ATP. Polar residues predominate over residues threonine 100–leucine 138. Residues threonine 100 to serine 166 are disordered. Lysine 183 is a binding site for ATP. Catalysis depends on aspartate 286, which acts as the Proton acceptor.

The protein belongs to the protein kinase superfamily. CMGC Ser/Thr protein kinase family. CDC2/CDKX subfamily. As to quaternary structure, component of the SRB8-11 complex which consists of SRB8, SSN2/SRB9, SSN3/SRB10 and SSN8/SRB11. The SRB8-11 complex associates with the Mediator complex. The SSN3/SRB10 and SSN8/SRB11 kinase-cyclin pair also associate with the RNA polymerase II holoenzyme. Interacts with TUP1.

The protein resides in the nucleus. The catalysed reaction is L-seryl-[protein] + ATP = O-phospho-L-seryl-[protein] + ADP + H(+). It catalyses the reaction L-threonyl-[protein] + ATP = O-phospho-L-threonyl-[protein] + ADP + H(+). It carries out the reaction [DNA-directed RNA polymerase] + ATP = phospho-[DNA-directed RNA polymerase] + ADP + H(+). In terms of biological role, component of the SRB8-11 complex. The SRB8-11 complex is a regulatory module of the Mediator complex which is itself involved in regulation of basal and activated RNA polymerase II-dependent transcription. The SRB8-11 complex may be involved in the transcriptional repression of a subset of genes regulated by Mediator. It may inhibit the association of the Mediator complex with RNA polymerase II to form the holoenzyme complex. The SRB8-11 complex phosphorylates the C-terminal domain (CTD) of the largest subunit of RNA polymerase II RPB1 at serines 2 and 5. The SSN3/SRB10 and SSN8/SRB11 kinase-cyclin pair may also positively and negatively regulate numerous transcriptional activators in response to changes in nutritional and physiological conditions. Phosphorylates GCN4, promoting its ubiquitin-mediated degradation, and MSN2, promoting its nuclear exclusion. Phosphorylates STE12, thereby promoting its degradation and inhibition of filamentous growth. Phosphorylates GAL4, and this phosphorylation is required for efficient galactose-inducible transcription. Also phosphorylates BDF1 and the TAF2 subunit of the TFIID complex. The chain is Meiotic mRNA stability protein kinase SSN3 (SSN3) from Saccharomyces cerevisiae (strain ATCC 204508 / S288c) (Baker's yeast).